A 189-amino-acid chain; its full sequence is MVKMIVGLGNPGSKYEKTKHNIGFMAIDNIVKNLDVTFTDDKNFKAQIGSTFINHEKVYFVKPTTFMNNSGIAVKALLTYYNIDITDLIVIYDDLDMEVSKLRLRSKGSAGGHNGIKSIIAHIGTQEFNRIKVGIGRPLKGMTVISHVMGQFNTEDNIAISLTLDRVVNAVKFYLQENDFEKTMQKFNG.

Tyr15 is a binding site for tRNA. His20 acts as the Proton acceptor in catalysis. Phe66, Asn68, and Asn114 together coordinate tRNA.

The protein belongs to the PTH family. In terms of assembly, monomer.

Its subcellular location is the cytoplasm. It catalyses the reaction an N-acyl-L-alpha-aminoacyl-tRNA + H2O = an N-acyl-L-amino acid + a tRNA + H(+). In terms of biological role, hydrolyzes ribosome-free peptidyl-tRNAs (with 1 or more amino acids incorporated), which drop off the ribosome during protein synthesis, or as a result of ribosome stalling. Its function is as follows. Catalyzes the release of premature peptidyl moieties from peptidyl-tRNA molecules trapped in stalled 50S ribosomal subunits, and thus maintains levels of free tRNAs and 50S ribosomes. In Streptococcus pyogenes serotype M6 (strain ATCC BAA-946 / MGAS10394), this protein is Peptidyl-tRNA hydrolase.